The following is a 65-amino-acid chain: Gallinacin-1 alpha (65 aa).

Residues 1–19 (MRIVYLLLPFILLLAQGAA) form the signal peptide. A propeptide spanning residues 20–25 (GSSQAL) is cleaved from the precursor. Intrachain disulfides connect C31–C59, C38–C53, and C43–C60.

Belongs to the beta-defensin family.

The protein localises to the secreted. Its subcellular location is the cytoplasmic granule. In terms of biological role, has bactericidal activity. Potent activity against E.coli ML-35, L.monocytogenes EGD and C.albicans. The chain is Gallinacin-1 alpha from Gallus gallus (Chicken).